The chain runs to 343 residues: GDSL esterase/lipase EXL6 (343 aa).

The signal sequence occupies residues 1-21 (MFRGKIFVLSLFSIYVLSSAA). Asn24 is a glycosylation site (N-linked (GlcNAc...) asparagine). The Nucleophile role is filled by Ser36. Residues Asp318 and His321 contribute to the active site.

The protein belongs to the 'GDSL' lipolytic enzyme family. Flower buds and pollen.

It is found in the secreted. It localises to the extracellular space. Its subcellular location is the extracellular matrix. The protein localises to the pollen coat. Required for the formation of pollen coats and male fertility. The polypeptide is GDSL esterase/lipase EXL6 (EXL6) (Arabidopsis thaliana (Mouse-ear cress)).